We begin with the raw amino-acid sequence, 223 residues long: F420-dependent NADP reductase (223 aa).

NADP(+) contacts are provided by residues 9–12 (TGDQ), 30–31 (SR), Lys-35, Leu-75, and Val-101.

It belongs to the F420-dependent NADP reductase family.

It carries out the reaction reduced coenzyme F420-(gamma-L-Glu)(n) + NADP(+) = oxidized coenzyme F420-(gamma-L-Glu)(n) + NADPH + 2 H(+). Catalyzes the reduction of NADP(+) with F420H(2) via hydride transfer, and the reverse reaction, i.e. the reduction of F420 with NADPH. Probably functions in the regeneration of NADPH required in biosynthetic reactions. The sequence is that of F420-dependent NADP reductase (fno) from Methanocaldococcus jannaschii (strain ATCC 43067 / DSM 2661 / JAL-1 / JCM 10045 / NBRC 100440) (Methanococcus jannaschii).